Consider the following 623-residue polypeptide: Ciliated left-right organizer metallopeptidase (623 aa).

The N-terminal stretch at 1-20 is a signal peptide; that stretch reads MSFLLCIGILLLPWFPCVCG. Topologically, residues 21–578 are extracellular; it reads KCIFDQIQRS…LFLVSEAKIS (558 aa). His-249 is a binding site for Zn(2+). Residue Glu-250 is part of the active site. Positions 253 and 326 each coordinate Zn(2+). The chain crosses the membrane as a helical span at residues 579–599; that stretch reads LAAVLSLMAVFALLSAAVLLY. Topologically, residues 600-623 are cytoplasmic; that stretch reads RKNLSVRVHAASYRTPLPHILYRN.

It belongs to the peptidase M8 family. Zn(2+) serves as cofactor. As to expression, expressed specifically in dorsal forerunner cells (DFCs) that form a ciliated Kupffer's vesicle later.

Its subcellular location is the membrane. Plays an essential role for patterning the left-right axis. Requires solely on the left side, downstream of the leftward flow, but upstream of dand5, a nodal inhibitor involved in left-right patterning. The protein is Ciliated left-right organizer metallopeptidase (cirop) of Danio rerio (Zebrafish).